Consider the following 516-residue polypeptide: L-amino acid oxidase bordonein-L (516 aa).

Residues 1-18 (MNVFFMFSLLFLAALGSC) form the signal peptide. A disulfide bond links Cys-28 and Cys-189. FAD contacts are provided by residues 61-62 (MA), 81-82 (EA), Arg-89, and 103-106 (GPMR). The substrate site is built by Arg-106 and His-239. Val-279 contacts FAD. The cysteines at positions 349 and 430 are disulfide-linked. A glycan (N-linked (GlcNAc...) asparagine) is linked at Asn-379. Tyr-390 contacts substrate. Residues Glu-475 and 482–487 (GWIDST) contribute to the FAD site. 482 to 483 (GW) is a binding site for substrate.

Homodimer; non-covalently linked. The cofactor is FAD. Post-translationally, N-glycosylated. N-glycan probably consists of the disaccharide N-acetylglucosamine-fucose (HexNAc-Fuc). Expressed by the venom gland.

The protein resides in the secreted. It carries out the reaction an L-alpha-amino acid + O2 + H2O = a 2-oxocarboxylate + H2O2 + NH4(+). The catalysed reaction is L-leucine + O2 + H2O = 4-methyl-2-oxopentanoate + H2O2 + NH4(+). The enzyme catalyses L-phenylalanine + O2 + H2O = 3-phenylpyruvate + H2O2 + NH4(+). It catalyses the reaction L-tryptophan + O2 + H2O = indole-3-pyruvate + H2O2 + NH4(+). It carries out the reaction L-methionine + O2 + H2O = 4-methylsulfanyl-2-oxobutanoate + H2O2 + NH4(+). The catalysed reaction is L-isoleucine + O2 + H2O = (S)-3-methyl-2-oxopentanoate + H2O2 + NH4(+). The enzyme catalyses L-arginine + O2 + H2O = 5-guanidino-2-oxopentanoate + H2O2 + NH4(+). It catalyses the reaction L-histidine + O2 + H2O = 3-(imidazol-5-yl)pyruvate + H2O2 + NH4(+). Functionally, catalyzes an oxidative deamination of predominantly hydrophobic and aromatic L-amino acids, thus producing hydrogen peroxide that may contribute to the diverse toxic effects of this enzyme. Is highly active on L-Met, L-Leu, L-Trp, and L-Phe, moderately active on L-Ile, L-His, and L-Arg, and weakly or not active on L-Gln, L-Val, L-Asn, L-Ala, L-Lys, L-Ser, L-Thr, L-Pro, L-Asp, L-Gly, L-Tyr, L-Cys and L-Glu. This enzyme exhibits diverse biological activities, such as hemorrhage, hemolysis, edema, apoptosis of vascular endothelial cells or tumor cell lines, antibacterial and antiparasitic activities, as well as regulation of platelet aggregation. Its effect on platelets is controversial, since it either induces aggregation or inhibits agonist-induced aggregation. These different effects are probably due to different experimental conditions. In vitro, the enzyme exhibits cytotoxicity against fibroblast cell line and kills Leishmania amazonensis promastigotes, intensified by substrate addition. This chain is L-amino acid oxidase bordonein-L, found in Crotalus durissus terrificus (South American rattlesnake).